Here is a 474-residue protein sequence, read N- to C-terminus: tRNA (adenine(58)-N(1))-methyltransferase catalytic subunit trm61 (474 aa).

The disordered stretch occupies residues 75–109; that stretch reads DTGSRGRTQKMKRKADELDSSTQAEDKPSPQTPVA. S-adenosyl-L-methionine-binding positions include 163-165, Glu197, Arg202, 225-226, and Asp250; these read SGS and DV. Disordered regions lie at residues 356-390 and 423-474; these read LFRA…VPVY and DEKR…SQKE. Residues 358 to 367 show a composition bias toward polar residues; it reads RATQNQSDGD. Over residues 423 to 432 the composition is skewed to basic and acidic residues; that stretch reads DEKRCREKWP. Residues 434–443 are compositionally biased toward polar residues; it reads NRVQEPQGPQ. Positions 450-474 are enriched in basic and acidic residues; it reads KRESREKRDLQRKEQSQPETESQKE.

The protein belongs to the class I-like SAM-binding methyltransferase superfamily. TRM61 family. Heterotetramer; composed of two copies of TRM6 and two copies of TRM61.

It localises to the nucleus. The catalysed reaction is adenosine(58) in tRNA + S-adenosyl-L-methionine = N(1)-methyladenosine(58) in tRNA + S-adenosyl-L-homocysteine + H(+). Its function is as follows. Catalytic subunit of tRNA (adenine-N(1)-)-methyltransferase, which catalyzes the formation of N(1)-methyladenine at position 58 (m1A58) in initiator methionyl-tRNA. In Aspergillus oryzae (strain ATCC 42149 / RIB 40) (Yellow koji mold), this protein is tRNA (adenine(58)-N(1))-methyltransferase catalytic subunit trm61 (trm61).